A 275-amino-acid chain; its full sequence is Glutamate racemase (275 aa).

Residues 22-23 (DS) and 54-55 (YG) contribute to the substrate site. Catalysis depends on C85, which acts as the Proton donor/acceptor. A substrate-binding site is contributed by 86 to 87 (NT). The Proton donor/acceptor role is filled by C196. 197 to 198 (TH) provides a ligand contact to substrate.

It belongs to the aspartate/glutamate racemases family.

It carries out the reaction L-glutamate = D-glutamate. The protein operates within cell wall biogenesis; peptidoglycan biosynthesis. Functionally, provides the (R)-glutamate required for cell wall biosynthesis. The polypeptide is Glutamate racemase (Pseudomonas syringae pv. tomato (strain ATCC BAA-871 / DC3000)).